Consider the following 346-residue polypeptide: N-acetyl-gamma-glutamyl-phosphate reductase (346 aa).

Cysteine 151 is an active-site residue.

This sequence belongs to the NAGSA dehydrogenase family. Type 1 subfamily.

It localises to the cytoplasm. The enzyme catalyses N-acetyl-L-glutamate 5-semialdehyde + phosphate + NADP(+) = N-acetyl-L-glutamyl 5-phosphate + NADPH + H(+). It functions in the pathway amino-acid biosynthesis; L-arginine biosynthesis; N(2)-acetyl-L-ornithine from L-glutamate: step 3/4. In terms of biological role, catalyzes the NADPH-dependent reduction of N-acetyl-5-glutamyl phosphate to yield N-acetyl-L-glutamate 5-semialdehyde. The protein is N-acetyl-gamma-glutamyl-phosphate reductase of Ehrlichia chaffeensis (strain ATCC CRL-10679 / Arkansas).